Here is an 868-residue protein sequence, read N- to C-terminus: Leucine--tRNA ligase (868 aa).

Residues 42–52 (PYPSGKLHMGH) carry the 'HIGH' region motif. Positions 624–628 (TMSKS) match the 'KMSKS' region motif. Lys-627 contributes to the ATP binding site.

The protein belongs to the class-I aminoacyl-tRNA synthetase family.

It localises to the cytoplasm. The catalysed reaction is tRNA(Leu) + L-leucine + ATP = L-leucyl-tRNA(Leu) + AMP + diphosphate. The protein is Leucine--tRNA ligase of Nitrosomonas eutropha (strain DSM 101675 / C91 / Nm57).